The following is a 400-amino-acid chain: Egl nine homolog 1 (400 aa).

A2 carries the post-translational modification N-acetylalanine. Residues 6 to 20 (GGPGVLSASERDRQY) are required for nuclear export. S12 is subject to Phosphoserine. Zn(2+) is bound by residues C21, C24, C33, C36, C42, H46, H54, and C58. The MYND-type; atypical zinc finger occupies 21–58 (CELCGKMENLLRCGRCRSSFYCCKEHQRQDWKKHKLVC). Residues 62–74 (EAPRAQPAPAQPR) show a composition bias toward low complexity. The disordered stretch occupies residues 62–161 (EAPRAQPAPA…PGGGLRPNGQ (100 aa)). S114 is modified (phosphoserine). The segment covering 142-157 (AGGGPGEALSPGGGLR) has biased composition (gly residues). C178 and C185 each carry S-nitrosocysteine. Positions 218–228 (VSQKSDSSKDI) are beta(2)beta(3) 'finger-like' loop. A Fe2OG dioxygenase domain is found at 271–369 (GRTKAMVACY…RYAITVWYFD (99 aa)). S-nitrosocysteine is present on C279. Fe cation contacts are provided by H290 and D292. An S-nitrosocysteine mark is found at C300 and C303. Fe cation is bound at residue H351. R360 is a 2-oxoglutarate binding site.

As to quaternary structure, monomer. Interacts with ING4; the interaction inhibits the hydroxylation of HIF alpha proteins. Interacts with PTGES3 (via PXLE motif); thereby recruiting EGLN1 to the HSP90 pathway to facilitate HIF alpha proteins hydroxylation. Interacts with LIMD1. Found in a complex composed of LIMD1, VHL, EGLN1/PHD2, ELOB and CUL2. Interacts with EPAS1. Interacts with CBFA2T3 and HIF1A. Fe(2+) serves as cofactor. L-ascorbate is required as a cofactor. S-nitrosylation inhibits the enzyme activity up to 60% under aerobic conditions. Chelation of Fe(2+) has no effect on the S-nitrosylation. It is uncertain whether nitrosylation occurs on Cys-300 or Cys-303. As to expression, expressed in heart, brain liver, skeletal muscle and kidney. Low levels were detected in the lung. Constitutively expressed during differentiation of C2C12 skeletal myocytes.

It localises to the cytoplasm. The protein resides in the nucleus. It carries out the reaction L-prolyl-[hypoxia-inducible factor alpha subunit] + 2-oxoglutarate + O2 = trans-4-hydroxy-L-prolyl-[hypoxia-inducible factor alpha subunit] + succinate + CO2. In terms of biological role, cellular oxygen sensor that catalyzes, under normoxic conditions, the post-translational formation of 4-hydroxyproline in hypoxia-inducible factor (HIF) alpha proteins. Hydroxylates a specific proline found in each of the oxygen-dependent degradation (ODD) domains (N-terminal, NODD, and C-terminal, CODD) of HIF1A. Also hydroxylates HIF2A. Has a preference for the CODD site for both HIF1A and HIF1B. Hydroxylated HIFs are then targeted for proteasomal degradation via the von Hippel-Lindau ubiquitination complex. Under hypoxic conditions, the hydroxylation reaction is attenuated allowing HIFs to escape degradation resulting in their translocation to the nucleus, heterodimerization with HIF1B, and increased expression of hypoxy-inducible genes. EGLN1 is the most important isozyme under normoxia and, through regulating the stability of HIF1, involved in various hypoxia-influenced processes such as angiogenesis in retinal and cardiac functionality. Target proteins are preferentially recognized via a LXXLAP motif. The polypeptide is Egl nine homolog 1 (Egln1) (Mus musculus (Mouse)).